A 225-amino-acid polypeptide reads, in one-letter code: Lipid A 4'-phosphatase (225 aa).

Transmembrane regions (helical) follow at residues 29 to 49 (SAFT…YILL), 51 to 71 (NFHW…ITFA), 110 to 130 (FGFP…LICL), 136 to 156 (LSIF…YLGL), 160 to 180 (GDLV…YFIA), and 203 to 223 (TEVM…YSIV).

Belongs to the lipid A LpxF 4'-phosphatase family.

The protein localises to the cell inner membrane. The protein operates within bacterial outer membrane biogenesis; LPS lipid A biosynthesis. Its function is as follows. Probably removes the 4'-phosphate group from lipid A. Removal of this phosphate group confers resistance to cationic antimicrobial peptides (CAMPs), inflammation-associated peptides produced by the human host. This LPS modification helps maintain the stability of this commensal bacterium in gut microbiota. In Bacteroides thetaiotaomicron (strain ATCC 29148 / DSM 2079 / JCM 5827 / CCUG 10774 / NCTC 10582 / VPI-5482 / E50), this protein is Lipid A 4'-phosphatase.